The sequence spans 131 residues: MKLAAFYKGRDLKKPSGGKKGRVRKTKKKALCGGPPQIPKLGERDLRLVERVTGGNLKVRVREVRYANVYIPKERRHVKAKILSILSTPANPDFARRNLIVKGAVIQTEVGRAVVTSRPGQDGVINAVLIE.

The segment at 11 to 36 is disordered; the sequence is DLKKPSGGKKGRVRKTKKKALCGGPP. The segment covering 16–30 has biased composition (basic residues); sequence SGGKKGRVRKTKKKA.

This sequence belongs to the eukaryotic ribosomal protein eS8 family. As to quaternary structure, part of the 30S ribosomal subunit.

The polypeptide is Small ribosomal subunit protein eS8 (Pyrobaculum islandicum (strain DSM 4184 / JCM 9189 / GEO3)).